The primary structure comprises 816 residues: Sucrose synthase 1 (816 aa).

The segment at 280–757 (MVFNVVIMSP…GLQRIEEKYT (478 aa)) is GT-B glycosyltransferase.

It belongs to the glycosyltransferase 1 family. Plant sucrose synthase subfamily. As to quaternary structure, homotetramer or heterotetramer with SUS2. In terms of tissue distribution, expressed in root phloem and leaf mesophyll. Expressed in phloem tissues and aleurone layers of seeds and at lower levels in the pericarp and endosperm cells (at protein level). Predominantly expressed in elongating tissues including roots, developing leaves and internodes.

It carries out the reaction an NDP-alpha-D-glucose + D-fructose = a ribonucleoside 5'-diphosphate + sucrose + H(+). In terms of biological role, sucrose-cleaving enzyme that provides UDP-glucose and fructose for various metabolic pathways. The sequence is that of Sucrose synthase 1 (SUS1) from Oryza sativa subsp. japonica (Rice).